The chain runs to 451 residues: MKDEQLYYFEKSPVFKAMMHFSLPMMIGTLLSVIYGILNIYFIGFLEDSHMISAISLTLPVFAILMGLGNLFDVGAGTYISRLLGAKDYSKSKFVSSFSIYGGIALGLIVILVALPFSDQIAAILGARGETLALTSNYLKVMFLSAPFVILFFILEQFARAIGAPMISMIGMLASVSLNIILDPILIFGFDLNVVGAALGTAISNVAAALFFIIYFMKNSDVVSVNIKLAKPNKEMLSEIFKIGIPAFLMSILMGFTGLVLNLFLAHYGNFAIASYGISFRLVQFPELIIMGLCEGVVPLIAYNFMSNKGRMKDVIKAVIMSIGVIFVVCMIAVFTIGHHMVGLFTTDQAIVEMATFILKVTMTSLLLNGIGFLFTGMLQATGQGRGATIMAILQGVVIIPVLFIMNALFGLTGVMWSLLIAESLCALAAMLIVYLLRDRLTVDTSELIEG.

Helical transmembrane passes span 26 to 46, 52 to 72, 97 to 117, 139 to 159, 170 to 190, 194 to 214, 245 to 265, 282 to 302, 318 to 338, 355 to 375, 390 to 410, and 417 to 437; these read MIGTLLSVIYGILNIYFIGFL, ISAISLTLPVFAILMGLGNLF, SFSIYGGIALGLIVILVALPF, LKVMFLSAPFVILFFILEQFA, IGMLASVSLNIILDPILIFGF, VVGAALGTAISNVAAALFFII, IPAFLMSILMGFTGLVLNLFL, LVQFPELIIMGLCEGVVPLIA, AVIMSIGVIFVVCMIAVFTIG, ATFILKVTMTSLLLNGIGFLF, IMAILQGVVIIPVLFIMNALF, and WSLLIAESLCALAAMLIVYLL.

This sequence belongs to the multi antimicrobial extrusion (MATE) (TC 2.A.66.1) family. MepA subfamily.

It localises to the cell membrane. In terms of biological role, multidrug resistance efflux protein. The polypeptide is Multidrug export protein MepA (mepA) (Staphylococcus aureus (strain bovine RF122 / ET3-1)).